Reading from the N-terminus, the 302-residue chain is MSKQAAVIELGYMGISVKDPDAWKSFATDMLGLQVLDEGEKDRFYLRMDYWHHRIVVHHNGQDDLEYLGWRVAGKPEFEALGQKLIDAGYKIRICDKVEAQERMVLGLMKTEDPGGNPTEIFWGPRIDMSNPFHPGRPLHGKFVTGDQGLGHCIVRQTDVAEAHKFYSLLGFRGDVEYRIPLPNGMTAELSFMHCNARDHSIAFGAMPAAKRLNHLMLEYTHMEDLGYTHQQFVKNEIDIALQLGIHANDKALTFYGATPSGWLIEPGWRGATAIDEAEYYVGDIFGHGVEATGYGLDVKLS.

VOC domains follow at residues 9–124 (ELGY…IFWG) and 149–270 (GLGH…PGWR). His-152 provides a ligand contact to Fe cation. Residues His-152, 199 to 200 (DH), His-215, and Tyr-256 contribute to the substrate site. His-215 contacts Fe cation. Fe cation is bound at residue Glu-266.

The protein belongs to the extradiol ring-cleavage dioxygenase family. Fe(2+) serves as cofactor.

It carries out the reaction naphthalene-1,2-diol + O2 = 2-hydroxychromene-2-carboxylate + H(+). It functions in the pathway aromatic compound metabolism; naphthalene degradation. In terms of biological role, involved in the naphthalene catabolic pathway. Catalyzes the meta-cleavage of 1,2-dihydroxynaphthalene (1,2-DHN) to yield 2-hydroxychromene-2-carboxylic acid. This chain is 1,2-dihydroxynaphthalene dioxygenase (nahC), found in Pseudomonas putida (Arthrobacter siderocapsulatus).